The chain runs to 1091 residues: ATP-dependent RNA helicase ddx54 (1091 aa).

Disordered stretches follow at residues 1–63 and 150–231; these read MVKP…KEEF and DNSN…KTGG. A compositionally biased stretch (basic and acidic residues) spans 26 to 35; sequence MKGKKLETKS. The segment covering 150–161 has biased composition (polar residues); sequence DNSNFDNNGDQF. Residues 196-207 show a composition bias toward basic and acidic residues; sequence KKEEIESSEKFE. The Q motif signature appears at 230-258; sequence GGFQSMDLTKNLLKAILKKGFNVPTPIQR. Residues 261-433 form the Helicase ATP-binding domain; the sequence is IPMILDGHDI…RAGLNNPKLI (173 aa). 274-281 contributes to the ATP binding site; the sequence is ARTGSGKT. Positions 381–384 match the DEAD box motif; that stretch reads DEAD. Residues 478–632 enclose the Helicase C-terminal domain; sequence TETTTTTTTN…KFQYEGQTIN (155 aa). Disordered stretches follow at residues 801 to 896 and 933 to 1091; these read EEML…TPEN and KRKG…KSRK. Over residues 814 to 823 the composition is skewed to basic and acidic residues; the sequence is DNNKDIKMNE. Residues 824 to 855 are compositionally biased toward acidic residues; sequence NDDENDDDDEEGENDDDEEEENEKDEDDEEDE. 3 stretches are compositionally biased toward basic and acidic residues: residues 865–874, 944–975, and 1008–1019; these read ESSDKNDNNK, DADR…EEWK, and QGREKEKKDNKA. Residues 1020-1029 are compositionally biased toward basic residues; sequence SHAKGSHGLK. A compositionally biased stretch (basic and acidic residues) spans 1031–1052; sequence RPSELKDKNQISKNRSEKERKM. Residues 1068–1079 are compositionally biased toward gly residues; that stretch reads SGGGGGGKGSKF.

It belongs to the DEAD box helicase family. DDX54/DBP10 subfamily.

Its subcellular location is the nucleus. The protein localises to the nucleolus. It carries out the reaction ATP + H2O = ADP + phosphate + H(+). In terms of biological role, ATP-binding RNA helicase which may be involved in the ribosome biogenesis. This Dictyostelium discoideum (Social amoeba) protein is ATP-dependent RNA helicase ddx54 (helA).